A 319-amino-acid polypeptide reads, in one-letter code: GPI-specific phospholipase A2-like PGAP3 (319 aa).

The first 23 residues, Met-1–Gly-23, serve as a signal peptide directing secretion. The Lumenal segment spans residues Asp-24–Cys-101. A glycan (N-linked (GlcNAc...) asparagine) is linked at Asn-40. Residues Phe-102 to Leu-122 traverse the membrane as a helical segment. At Cys-123–Met-135 the chain is on the cytoplasmic side. A helical transmembrane segment spans residues Tyr-136–Phe-156. Over His-157 to Tyr-169 the chain is Lumenal. The chain crosses the membrane as a helical span at residues Phe-170–Leu-190. Over Gln-191–Arg-200 the chain is Cytoplasmic. The chain crosses the membrane as a helical span at residues Ala-201 to Tyr-221. Residues Gly-222 to Asn-224 are Lumenal-facing. The chain crosses the membrane as a helical span at residues Met-225–Trp-245. The Cytoplasmic portion of the chain corresponds to Asn-246 to Ala-257. The helical transmembrane segment at Val-258–Trp-278 threads the bilayer. The Lumenal segment spans residues Val-279–Asp-281. A helical membrane pass occupies residues Ala-282–Glu-302. Over Asp-303–Asp-319 the chain is Cytoplasmic.

This sequence belongs to the PGAP3 family.

It localises to the golgi apparatus membrane. In terms of biological role, involved in the fatty acid remodeling steps of GPI-anchor maturation where the unsaturated acyl chain at sn-2 of inositol phosphate is replaced by a saturated stearoyl chain. May catalyze the first step of the fatty acid remodeling, by removing the unsaturated acyl chain at sn-2 of inositol phosphate, generating a lyso-GPI intermediate. The fatty acid remodeling steps is critical for the integration of GPI-APs into lipid rafts. The sequence is that of GPI-specific phospholipase A2-like PGAP3 from Bos taurus (Bovine).